Consider the following 139-residue polypeptide: Large-conductance mechanosensitive channel (139 aa).

3 helical membrane-spanning segments follow: residues 16–36 (VIDL…VKAL), 40–60 (IVMP…LAWV), and 79–99 (GAFI…FMLV).

This sequence belongs to the MscL family. As to quaternary structure, homopentamer.

Its subcellular location is the cell inner membrane. Channel that opens in response to stretch forces in the membrane lipid bilayer. May participate in the regulation of osmotic pressure changes within the cell. This Phenylobacterium zucineum (strain HLK1) protein is Large-conductance mechanosensitive channel.